A 154-amino-acid chain; its full sequence is NADPH-dependent 7-cyano-7-deazaguanine reductase (154 aa).

Residues 1-21 (MPNTDVSSLSMLGQQTETAQS) are compositionally biased toward polar residues. Residues 1-28 (MPNTDVSSLSMLGQQTETAQSPEEAVLE) are disordered. Residue Cys-52 is the Thioimide intermediate of the active site. The active-site Proton donor is Asp-59. Substrate contacts are provided by residues 74–76 (VES) and 93–94 (HE).

The protein belongs to the GTP cyclohydrolase I family. QueF type 1 subfamily.

It is found in the cytoplasm. The catalysed reaction is 7-aminomethyl-7-carbaguanine + 2 NADP(+) = 7-cyano-7-deazaguanine + 2 NADPH + 3 H(+). The protein operates within tRNA modification; tRNA-queuosine biosynthesis. Its function is as follows. Catalyzes the NADPH-dependent reduction of 7-cyano-7-deazaguanine (preQ0) to 7-aminomethyl-7-deazaguanine (preQ1). The protein is NADPH-dependent 7-cyano-7-deazaguanine reductase of Rhizobium johnstonii (strain DSM 114642 / LMG 32736 / 3841) (Rhizobium leguminosarum bv. viciae).